Here is a 240-residue protein sequence, read N- to C-terminus: Phosphoribosylaminoimidazole-succinocarboxamide synthase (240 aa).

It belongs to the SAICAR synthetase family.

The enzyme catalyses 5-amino-1-(5-phospho-D-ribosyl)imidazole-4-carboxylate + L-aspartate + ATP = (2S)-2-[5-amino-1-(5-phospho-beta-D-ribosyl)imidazole-4-carboxamido]succinate + ADP + phosphate + 2 H(+). It functions in the pathway purine metabolism; IMP biosynthesis via de novo pathway; 5-amino-1-(5-phospho-D-ribosyl)imidazole-4-carboxamide from 5-amino-1-(5-phospho-D-ribosyl)imidazole-4-carboxylate: step 1/2. This Wolbachia pipientis wMel protein is Phosphoribosylaminoimidazole-succinocarboxamide synthase.